The following is a 176-amino-acid chain: Probable non-specific lipid-transfer protein 1 (176 aa).

An N-terminal signal peptide occupies residues 1–37; that stretch reads MRTVSAPSAVALVVIVAAGLAWTSLASVAPPAPAPGS. Cystine bridges form between cysteine 41–cysteine 89, cysteine 51–cysteine 66, cysteine 67–cysteine 112, and cysteine 87–cysteine 128. Residues 139–176 form a disordered region; the sequence is QLPVSLRHGPVTGPSDPAHKARLERPQIRVPPPAPEKA. Residues 155-165 show a composition bias toward basic and acidic residues; sequence PAHKARLERPQ. The segment covering 167-176 has biased composition (pro residues); sequence RVPPPAPEKA.

Belongs to the plant LTP family.

In terms of biological role, plant non-specific lipid-transfer proteins transfer phospholipids as well as galactolipids across membranes. May play a role in wax or cutin deposition in the cell walls of expanding epidermal cells and certain secretory tissues. This chain is Probable non-specific lipid-transfer protein 1, found in Parietaria judaica (Pellitory-of-the-wall).